The chain runs to 182 residues: Protein GrpE (182 aa).

This sequence belongs to the GrpE family. As to quaternary structure, homodimer.

It localises to the cytoplasm. Functionally, participates actively in the response to hyperosmotic and heat shock by preventing the aggregation of stress-denatured proteins, in association with DnaK and GrpE. It is the nucleotide exchange factor for DnaK and may function as a thermosensor. Unfolded proteins bind initially to DnaJ; upon interaction with the DnaJ-bound protein, DnaK hydrolyzes its bound ATP, resulting in the formation of a stable complex. GrpE releases ADP from DnaK; ATP binding to DnaK triggers the release of the substrate protein, thus completing the reaction cycle. Several rounds of ATP-dependent interactions between DnaJ, DnaK and GrpE are required for fully efficient folding. In Aquifex aeolicus (strain VF5), this protein is Protein GrpE.